The primary structure comprises 130 residues: S-adenosylmethionine decarboxylase proenzyme (130 aa).

Residue Ser-64 is the Schiff-base intermediate with substrate; via pyruvic acid of the active site. Ser-64 bears the Pyruvic acid (Ser); by autocatalysis mark. His-69 functions as the Proton acceptor; for processing activity in the catalytic mechanism. Catalysis depends on Cys-84, which acts as the Proton donor; for catalytic activity.

Belongs to the prokaryotic AdoMetDC family. Type 1 subfamily. As to quaternary structure, heterotetramer of two alpha and two beta chains arranged as a dimer of alpha/beta heterodimers. Pyruvate serves as cofactor. In terms of processing, is synthesized initially as an inactive proenzyme. Formation of the active enzyme involves a self-maturation process in which the active site pyruvoyl group is generated from an internal serine residue via an autocatalytic post-translational modification. Two non-identical subunits are generated from the proenzyme in this reaction, and the pyruvate is formed at the N-terminus of the alpha chain, which is derived from the carboxyl end of the proenzyme. The post-translation cleavage follows an unusual pathway, termed non-hydrolytic serinolysis, in which the side chain hydroxyl group of the serine supplies its oxygen atom to form the C-terminus of the beta chain, while the remainder of the serine residue undergoes an oxidative deamination to produce ammonia and the pyruvoyl group blocking the N-terminus of the alpha chain.

It carries out the reaction S-adenosyl-L-methionine + H(+) = S-adenosyl 3-(methylsulfanyl)propylamine + CO2. It functions in the pathway amine and polyamine biosynthesis; S-adenosylmethioninamine biosynthesis; S-adenosylmethioninamine from S-adenosyl-L-methionine: step 1/1. Its function is as follows. Catalyzes the decarboxylation of S-adenosylmethionine to S-adenosylmethioninamine (dcAdoMet), the propylamine donor required for the synthesis of the polyamines spermine and spermidine from the diamine putrescine. The polypeptide is S-adenosylmethionine decarboxylase proenzyme (Thermoplasma volcanium (strain ATCC 51530 / DSM 4299 / JCM 9571 / NBRC 15438 / GSS1)).